We begin with the raw amino-acid sequence, 1388 residues long: Dicer-like protein 2 (1388 aa).

The 181-residue stretch at 23 to 203 folds into the Helicase ATP-binding domain; the sequence is MLEASMKENI…LLMVESNLDA (181 aa). 36–43 serves as a coordination point for ATP; that stretch reads MDTGSGKT. Residues 144 to 147 carry the DEAH box motif; the sequence is DEAH. One can recognise a Helicase C-terminal domain in the interval 368-537; it reads KFESLLNFLD…DDERQLQSVS (170 aa). One can recognise a Dicer dsRNA-binding fold domain in the interval 564 to 658; sequence AMAHLHHFCA…LPLTKKPELK (95 aa). RNase III domains follow at residues 906-1059 and 1098-1281; these read ISAI…VDGG and NDRL…VDSG. Mg(2+)-binding residues include Glu1137, Asp1267, and Glu1270.

The protein belongs to the helicase family. Dicer subfamily. The cofactor is Mg(2+). It depends on Mn(2+) as a cofactor.

Dicer-like endonuclease involved in cleaving double-stranded RNA in the RNA interference (RNAi) pathway. Produces 21 to 25 bp dsRNAs (siRNAs) which target the selective destruction of homologous RNAs leading to sequence-specific suppression of gene expression, called post-transcriptional gene silencing (PTGS). Part of a broad host defense response against viral infection and transposons. This Aspergillus fumigatus (strain ATCC MYA-4609 / CBS 101355 / FGSC A1100 / Af293) (Neosartorya fumigata) protein is Dicer-like protein 2 (dcl2).